The sequence spans 385 residues: 1-deoxy-D-xylulose 5-phosphate reductoisomerase (385 aa).

6 residues coordinate NADPH: Thr10, Gly11, Ser12, Ile13, Lys37, and Asn124. Lys125 provides a ligand contact to 1-deoxy-D-xylulose 5-phosphate. Glu126 contributes to the NADPH binding site. Asp150 is a Mn(2+) binding site. 1-deoxy-D-xylulose 5-phosphate-binding residues include Ser151, Glu152, Ser176, and His199. Glu152 is a Mn(2+) binding site. Residue Gly205 participates in NADPH binding. 1-deoxy-D-xylulose 5-phosphate-binding residues include Ser212, Asn217, Lys218, and Glu221. Residue Glu221 coordinates Mn(2+).

The protein belongs to the DXR family. Mg(2+) is required as a cofactor. Requires Mn(2+) as cofactor.

The enzyme catalyses 2-C-methyl-D-erythritol 4-phosphate + NADP(+) = 1-deoxy-D-xylulose 5-phosphate + NADPH + H(+). The protein operates within isoprenoid biosynthesis; isopentenyl diphosphate biosynthesis via DXP pathway; isopentenyl diphosphate from 1-deoxy-D-xylulose 5-phosphate: step 1/6. Its function is as follows. Catalyzes the NADPH-dependent rearrangement and reduction of 1-deoxy-D-xylulose-5-phosphate (DXP) to 2-C-methyl-D-erythritol 4-phosphate (MEP). The polypeptide is 1-deoxy-D-xylulose 5-phosphate reductoisomerase (Clostridium botulinum (strain Langeland / NCTC 10281 / Type F)).